The primary structure comprises 270 residues: Phosphatidylglycerol--prolipoprotein diacylglyceryl transferase (270 aa).

4 helical membrane passes run 18–38 (IAVHWYGIIIGLGALLGLWLA), 55–75 (LVLFAIPIAILCARAYYVIFQ), 89–109 (IWNGGLAIHGGLIGAVLTGII), and 115–135 (GLSFWKLADIAAPSILLGQAI). Arg137 is a binding site for a 1,2-diacyl-sn-glycero-3-phospho-(1'-sn-glycerol). The next 3 helical transmembrane spans lie at 177–197 (QPTFLYESLWSFTGVVVLLLL), 205–225 (GELFLIYVIWYSMGRYFIEGL), and 236–256 (LRIAQVISIVLILCAAALIAY).

This sequence belongs to the Lgt family.

It is found in the cell membrane. The enzyme catalyses L-cysteinyl-[prolipoprotein] + a 1,2-diacyl-sn-glycero-3-phospho-(1'-sn-glycerol) = an S-1,2-diacyl-sn-glyceryl-L-cysteinyl-[prolipoprotein] + sn-glycerol 1-phosphate + H(+). It participates in protein modification; lipoprotein biosynthesis (diacylglyceryl transfer). Catalyzes the transfer of the diacylglyceryl group from phosphatidylglycerol to the sulfhydryl group of the N-terminal cysteine of a prolipoprotein, the first step in the formation of mature lipoproteins. The protein is Phosphatidylglycerol--prolipoprotein diacylglyceryl transferase of Bacillus licheniformis (strain ATCC 14580 / DSM 13 / JCM 2505 / CCUG 7422 / NBRC 12200 / NCIMB 9375 / NCTC 10341 / NRRL NRS-1264 / Gibson 46).